The following is a 350-amino-acid chain: 3-dehydroquinate synthase (350 aa).

NAD(+) is bound by residues 63 to 68, 97 to 101, 121 to 122, Lys-134, Lys-143, and 161 to 164; these read DGEEYK, GVIGD, TT, and FLKT. Residues Glu-176, His-235, and His-252 each contribute to the Zn(2+) site.

This sequence belongs to the sugar phosphate cyclases superfamily. Dehydroquinate synthase family. Co(2+) is required as a cofactor. Zn(2+) serves as cofactor. It depends on NAD(+) as a cofactor.

It localises to the cytoplasm. The catalysed reaction is 7-phospho-2-dehydro-3-deoxy-D-arabino-heptonate = 3-dehydroquinate + phosphate. Its pathway is metabolic intermediate biosynthesis; chorismate biosynthesis; chorismate from D-erythrose 4-phosphate and phosphoenolpyruvate: step 2/7. In terms of biological role, catalyzes the conversion of 3-deoxy-D-arabino-heptulosonate 7-phosphate (DAHP) to dehydroquinate (DHQ). This is 3-dehydroquinate synthase from Sulfurovum sp. (strain NBC37-1).